Here is a 193-residue protein sequence, read N- to C-terminus: Large ribosomal subunit protein uL18 (193 aa).

The protein belongs to the universal ribosomal protein uL18 family. In terms of assembly, part of the 50S ribosomal subunit. Contacts the 5S and 23S rRNAs.

Its function is as follows. This is one of the proteins that bind and probably mediate the attachment of the 5S RNA into the large ribosomal subunit, where it forms part of the central protuberance. This chain is Large ribosomal subunit protein uL18, found in Methanobrevibacter smithii (strain ATCC 35061 / DSM 861 / OCM 144 / PS).